The sequence spans 661 residues: Coagulation factor XIII B chain (661 aa).

Positions Met1–Ala20 are cleaved as a signal peptide. Sushi domains are found at residues Pro24–Phe88, Lys89–Lys148, Glu151–Lys210, Leu211–Gly269, Asn272–Glu329, Val334–Glu391, Glu394–Glu452, Pro453–Thr516, Gly522–Glu580, and Pro581–Ile647. 20 cysteine pairs are disulfide-bonded: Cys25-Cys76, Cys59-Cys87, Cys91-Cys135, Cys118-Cys146, Cys153-Cys197, Cys180-Cys208, Cys213-Cys255, Cys241-Cys267, Cys274-Cys316, Cys302-Cys327, Cys336-Cys378, Cys364-Cys389, Cys396-Cys439, Cys425-Cys450, Cys454-Cys505, Cys486-Cys515, Cys524-Cys567, Cys553-Cys578, Cys582-Cys636, and Cys616-Cys646. Asn162 is a glycosylation site (N-linked (GlcNAc...) asparagine). N-linked (GlcNAc...) asparagine glycosylation occurs at Asn545. A Cell attachment site motif is present at residues Arg617–Asp619.

In terms of assembly, tetramer of two A chains (F13A1) and two B (F13B) chains.

The protein localises to the secreted. The B chain of factor XIII is not catalytically active, but is thought to stabilize the A subunits and regulate the rate of transglutaminase formation by thrombin. The polypeptide is Coagulation factor XIII B chain (F13B) (Homo sapiens (Human)).